Reading from the N-terminus, the 175-residue chain is ATP synthase subunit b (175 aa).

A helical membrane pass occupies residues 22-42 (LNLLETNIINIAIVFGLLIFL).

It belongs to the ATPase B chain family. In terms of assembly, F-type ATPases have 2 components, F(1) - the catalytic core - and F(0) - the membrane proton channel. F(1) has five subunits: alpha(3), beta(3), gamma(1), delta(1), epsilon(1). F(0) has four main subunits: a(1), b(1), b'(1) and c(10-14). The alpha and beta chains form an alternating ring which encloses part of the gamma chain. F(1) is attached to F(0) by a central stalk formed by the gamma and epsilon chains, while a peripheral stalk is formed by the delta, b and b' chains.

The protein resides in the cell inner membrane. Functionally, f(1)F(0) ATP synthase produces ATP from ADP in the presence of a proton or sodium gradient. F-type ATPases consist of two structural domains, F(1) containing the extramembraneous catalytic core and F(0) containing the membrane proton channel, linked together by a central stalk and a peripheral stalk. During catalysis, ATP synthesis in the catalytic domain of F(1) is coupled via a rotary mechanism of the central stalk subunits to proton translocation. In terms of biological role, component of the F(0) channel, it forms part of the peripheral stalk, linking F(1) to F(0). In Gloeobacter violaceus (strain ATCC 29082 / PCC 7421), this protein is ATP synthase subunit b.